Here is a 242-residue protein sequence, read N- to C-terminus: ATP synthase subunit a (242 aa).

6 helical membrane passes run 29-49 (SSIY…LAFY), 84-104 (FIPL…LGMT), 114-134 (IIVT…VGFI), 140-160 (FLTL…MIVI), 181-201 (MAGH…MIYL), and 203-223 (FLPI…AILQ).

This sequence belongs to the ATPase A chain family. In terms of assembly, F-type ATPases have 2 components, CF(1) - the catalytic core - and CF(0) - the membrane proton channel. CF(1) has five subunits: alpha(3), beta(3), gamma(1), delta(1), epsilon(1). CF(0) has three main subunits: a(1), b(2) and c(9-12). The alpha and beta chains form an alternating ring which encloses part of the gamma chain. CF(1) is attached to CF(0) by a central stalk formed by the gamma and epsilon chains, while a peripheral stalk is formed by the delta and b chains.

The protein localises to the cell inner membrane. Functionally, key component of the proton channel; it plays a direct role in the translocation of protons across the membrane. The sequence is that of ATP synthase subunit a from Rickettsia typhi (strain ATCC VR-144 / Wilmington).